A 429-amino-acid polypeptide reads, in one-letter code: Histidine--tRNA ligase (429 aa).

Belongs to the class-II aminoacyl-tRNA synthetase family. In terms of assembly, homodimer.

Its subcellular location is the cytoplasm. The catalysed reaction is tRNA(His) + L-histidine + ATP = L-histidyl-tRNA(His) + AMP + diphosphate + H(+). This Escherichia fergusonii (strain ATCC 35469 / DSM 13698 / CCUG 18766 / IAM 14443 / JCM 21226 / LMG 7866 / NBRC 102419 / NCTC 12128 / CDC 0568-73) protein is Histidine--tRNA ligase.